A 170-amino-acid polypeptide reads, in one-letter code: Small ribosomal subunit protein uS13 (170 aa).

Over residues 128 to 140 (VRHKRGQKVRGQR) the composition is skewed to basic residues. Residues 128-170 (VRHKRGQKVRGQRTKSTGRTEGTIGVNVEAIKEEQAEDGGDEE) are disordered.

The protein belongs to the universal ribosomal protein uS13 family. Part of the 30S ribosomal subunit. Forms a loose heterodimer with protein S19. Forms two bridges to the 50S subunit in the 70S ribosome.

Its function is as follows. Located at the top of the head of the 30S subunit, it contacts several helices of the 16S rRNA. In the 70S ribosome it contacts the 23S rRNA (bridge B1a) and protein L5 of the 50S subunit (bridge B1b), connecting the 2 subunits; these bridges are implicated in subunit movement. The polypeptide is Small ribosomal subunit protein uS13 (Natronomonas pharaonis (strain ATCC 35678 / DSM 2160 / CIP 103997 / JCM 8858 / NBRC 14720 / NCIMB 2260 / Gabara) (Halobacterium pharaonis)).